Here is a 365-residue protein sequence, read N- to C-terminus: Eukaryotic translation initiation factor 3 subunit H (365 aa).

The 152-residue stretch at 15 to 166 (ILLDSLVVMK…IRAWRLSTAA (152 aa)) folds into the MPN domain. The tract at residues 276-295 (KRQQENESRLARGDPPLPMD) is disordered. A compositionally biased stretch (basic and acidic residues) spans 277–287 (RQQENESRLAR).

It belongs to the eIF-3 subunit H family. In terms of assembly, component of the eukaryotic translation initiation factor 3 (eIF-3) complex.

The protein localises to the cytoplasm. Component of the eukaryotic translation initiation factor 3 (eIF-3) complex, which is involved in protein synthesis of a specialized repertoire of mRNAs and, together with other initiation factors, stimulates binding of mRNA and methionyl-tRNAi to the 40S ribosome. The eIF-3 complex specifically targets and initiates translation of a subset of mRNAs involved in cell proliferation. The protein is Eukaryotic translation initiation factor 3 subunit H of Caenorhabditis briggsae.